Reading from the N-terminus, the 696-residue chain is Interleukin-1 receptor accessory protein-like 1 (696 aa).

A signal peptide spans 1–18; sequence MKAPIPHLILLYATFTQS. Residues 19–134 form the Ig-like C2-type 1 domain; it reads LKVVTKRGSA…YCMKVSISLT (116 aa). Over 19 to 357 the chain is Extracellular; it reads LKVVTKRGSA…LLHKRELMYT (339 aa). 2 disulfide bridges follow: cysteine 31–cysteine 126 and cysteine 53–cysteine 118. N-linked (GlcNAc...) asparagine glycosylation is found at asparagine 63, asparagine 122, and asparagine 138. 2 cysteine pairs are disulfide-bonded: cysteine 143/cysteine 185 and cysteine 164/cysteine 216. Ig-like C2-type domains are found at residues 143–232 and 242–350; these read CYNS…TELT and PKLL…VLLH. Residues asparagine 213, asparagine 264, and asparagine 331 are each glycosylated (N-linked (GlcNAc...) asparagine). A disulfide bridge connects residues cysteine 267 and cysteine 334. Residues 358–378 traverse the membrane as a helical segment; the sequence is VELAGGLGAILLLLVCLVTIY. Residues 379 to 696 lie on the Cytoplasmic side of the membrane; it reads KCYKIEIMLF…RETSISSVIW (318 aa). A TIR domain is found at 403–559; the sequence is KDYDAYLSYT…KFWKRLQYEM (157 aa). Glutamate 491 is an active-site residue. An interaction with NCS1 region spans residues 549-644; sequence SKFWKRLQYE…TGTLPLTSIG (96 aa). The segment at 659–680 is disordered; that stretch reads GQRPQTKSSREQNPDEAHTNSA. Over residues 666-676 the composition is skewed to basic and acidic residues; it reads SSREQNPDEAH.

This sequence belongs to the interleukin-1 receptor family. Homodimer. Interacts (calcium-independent) with NCS1. Interacts (via the first immunoglobilin domain) with PTPRD (via the second immunoglobilin domain); this interaction is PTPRD-splicing-dependent and induces pre- and post-synaptic differentiation of neurons and is required for IL1RAPL1-mediated synapse formation. In terms of tissue distribution, detected at low levels in heart, skeletal muscle, ovary, skin, amygdala, caudate nucleus, corpus callosum, hippocampus, substantia nigra and thalamus. Detected at very low levels in tonsil, prostate, testis, small intestine, placenta, colon and fetal liver.

It is found in the cell membrane. The protein localises to the cytoplasm. It localises to the cell projection. Its subcellular location is the axon. The protein resides in the dendrite. The enzyme catalyses NAD(+) + H2O = ADP-D-ribose + nicotinamide + H(+). In terms of biological role, may regulate secretion and presynaptic differentiation through inhibition of the activity of N-type voltage-gated calcium channel. May activate the MAP kinase JNK. Plays a role in neurite outgrowth. During dendritic spine formation can bidirectionally induce pre- and post-synaptic differentiation of neurons by trans-synaptically binding to PTPRD. In Homo sapiens (Human), this protein is Interleukin-1 receptor accessory protein-like 1 (IL1RAPL1).